A 453-amino-acid polypeptide reads, in one-letter code: Beta-agarase AgaB34 (453 aa).

An N-terminal signal peptide occupies residues Met-1–Ala-23. Residues Ala-24–Gly-301 enclose the GH16 domain. Glu-147 (nucleophile) is an active-site residue. Glu-152 functions as the Proton donor in the catalytic mechanism. A Ricin B-type lectin domain is found at Pro-313–Leu-453. 3 disulfide bridges follow: Cys-327-Cys-346, Cys-375-Cys-394, and Cys-423-Cys-442.

It belongs to the glycosyl hydrolase 16 family.

The protein resides in the secreted. It carries out the reaction Hydrolysis of (1-&gt;4)-beta-D-galactosidic linkages in agarose, giving the tetramer as the predominant product.. The chain is Beta-agarase AgaB34 from Agarivorans albus.